The primary structure comprises 180 residues: Dynactin subunit 6 (180 aa).

This sequence belongs to the dynactin subunits 5/6 family. Dynactin subunit 6 subfamily. As to quaternary structure, subunit of dynactin, a multiprotein complex part of a tripartite complex with dynein and a adapter, such as BICDL1, BICD2 or HOOK3. The dynactin complex is built around ACTR1A/ACTB filament and consists of an actin-related filament composed of a shoulder domain, a pointed end and a barbed end.

It is found in the cytoplasm. Its subcellular location is the cytoskeleton. Part of the dynactin complex that activates the molecular motor dynein for ultra-processive transport along microtubules. The protein is Dynactin subunit 6 (dnc-6) of Caenorhabditis elegans.